The sequence spans 264 residues: 5'-nucleotidase SurE (264 aa).

The a divalent metal cation site is built by aspartate 10, aspartate 11, serine 43, and asparagine 97.

The protein belongs to the SurE nucleotidase family. A divalent metal cation serves as cofactor.

Its subcellular location is the cytoplasm. The enzyme catalyses a ribonucleoside 5'-phosphate + H2O = a ribonucleoside + phosphate. Functionally, nucleotidase that shows phosphatase activity on nucleoside 5'-monophosphates. This chain is 5'-nucleotidase SurE, found in Sulfurimonas denitrificans (strain ATCC 33889 / DSM 1251) (Thiomicrospira denitrificans (strain ATCC 33889 / DSM 1251)).